Consider the following 312-residue polypeptide: Ribonuclease Z (312 aa).

7 residues coordinate Zn(2+): H63, H65, D67, H68, H141, D212, and H270. The Proton acceptor role is filled by D67.

The protein belongs to the RNase Z family. As to quaternary structure, homodimer. Zn(2+) serves as cofactor.

It carries out the reaction Endonucleolytic cleavage of RNA, removing extra 3' nucleotides from tRNA precursor, generating 3' termini of tRNAs. A 3'-hydroxy group is left at the tRNA terminus and a 5'-phosphoryl group is left at the trailer molecule.. In terms of biological role, zinc phosphodiesterase, which displays some tRNA 3'-processing endonuclease activity. Probably involved in tRNA maturation, by removing a 3'-trailer from precursor tRNA. The sequence is that of Ribonuclease Z from Lactobacillus acidophilus (strain ATCC 700396 / NCK56 / N2 / NCFM).